The primary structure comprises 474 residues: Trehalose-6-phosphate synthase (474 aa).

Position 10 (Arg-10) interacts with D-glucose 6-phosphate. 22–23 is a UDP-alpha-D-glucose binding site; that stretch reads GG. D-glucose 6-phosphate-binding residues include Tyr-77 and Asp-131. Residues Arg-263 and Lys-268 each contribute to the UDP-alpha-D-glucose site. A D-glucose 6-phosphate-binding site is contributed by Arg-301. UDP-alpha-D-glucose contacts are provided by residues Phe-340 and 366–370; that span reads LVAKE.

Belongs to the glycosyltransferase 20 family. As to quaternary structure, homotetramer.

The catalysed reaction is D-glucose 6-phosphate + UDP-alpha-D-glucose = alpha,alpha-trehalose 6-phosphate + UDP + H(+). The protein operates within glycan biosynthesis; trehalose biosynthesis. Probably involved in the osmoprotection via the biosynthesis of trehalose. Catalyzes the transfer of glucose from UDP-alpha-D-glucose (UDP-Glc) to D-glucose 6-phosphate (Glc-6-P) to form trehalose-6-phosphate. Acts with retention of the anomeric configuration of the UDP-sugar donor. This is Trehalose-6-phosphate synthase from Pseudomonas savastanoi (Pseudomonas syringae pv. savastanoi).